A 358-amino-acid polypeptide reads, in one-letter code: Variant-surface-glycoprotein phospholipase C (358 aa).

The PI-PLC X-box domain occupies 25 to 198 (IGQVYMVGAH…STRRIFLVVR (174 aa)).

As to quaternary structure, monomer. The N-terminus is blocked.

Its subcellular location is the membrane. It carries out the reaction a 6-(alpha-D-glucosaminyl)-1-(1,2-diacyl-sn-glycero-3-phospho)-1D-myo-inositol = 6-(alpha-D-glucosaminyl)-1D-myo-inositol 1,2-cyclic phosphate + a 1,2-diacyl-sn-glycerol. By hydrolysis of the attached glycolipid, releases soluble variant surface glycoprotein containing phosphoinositol from the cell wall of T.brucei after cell lysis. It also cleaves similar membrane anchors on some mammalian proteins. VSG lipase may play a role in processes such as parasite differentiation or antigenic variation. The protein is Variant-surface-glycoprotein phospholipase C of Trypanosoma brucei brucei.